Reading from the N-terminus, the 1484-residue chain is Chromosome partition protein MukB (1484 aa).

Position 34–41 (34–41 (GGNGAGKS)) interacts with ATP. 6 coiled-coil regions span residues 338–415 (NLVQ…RAIQ), 496–604 (QTAR…ALAW), 781–805 (AARESRLENLSAERDVLAERYATLS), 835–868 (EAEMRTLNGRRGELERELSDHHGQNQQSRQHYDQ), 903–1115 (HDAQ…SAKA), and 1206–1265 (DDPV…LQAV). Residues 666–783 (PGGTDDARLT…AVPLFGRAAR (118 aa)) are flexible hinge.

The protein belongs to the SMC family. MukB subfamily. In terms of assembly, homodimerization via its hinge domain. Binds to DNA via its C-terminal region. Interacts, and probably forms a ternary complex, with MukE and MukF via its C-terminal region. The complex formation is stimulated by calcium or magnesium. Interacts with tubulin-related protein FtsZ.

Its subcellular location is the cytoplasm. It is found in the nucleoid. Plays a central role in chromosome condensation, segregation and cell cycle progression. Functions as a homodimer, which is essential for chromosome partition. Involved in negative DNA supercoiling in vivo, and by this means organize and compact chromosomes. May achieve or facilitate chromosome segregation by condensation DNA from both sides of a centrally located replisome during cell division. This is Chromosome partition protein MukB from Sodalis glossinidius (strain morsitans).